Consider the following 398-residue polypeptide: DnaJ-like protein R260 (398 aa).

The region spanning Asp7–Gly72 is the J domain. A CR-type zinc finger spans residues Lys118 to Glu202. 4 CXXCXGXG motif repeats span residues Cys131–Gly138, Cys147–Gly154, Cys173–Lys180, and Cys190–Gly197. The segment at Leu364–Gln398 is disordered. A compositionally biased stretch (acidic residues) spans Pro371 to Glu382.

The cofactor is Zn(2+).

In Acanthamoeba polyphaga mimivirus (APMV), this protein is DnaJ-like protein R260.